The chain runs to 154 residues: Transcriptional repressor NrdR (154 aa).

The tract at residues 1-22 (MECPNCHKNASRVIDSRPSDEN) is disordered. A zinc finger lies at 3-34 (CPNCHKNASRVIDSRPSDENRAIRRRRECENC). Residues 49–139 (LLVIKNDGTR…IYRQFKDVSG (91 aa)) form the ATP-cone domain.

It belongs to the NrdR family. Zn(2+) is required as a cofactor.

In terms of biological role, negatively regulates transcription of bacterial ribonucleotide reductase nrd genes and operons by binding to NrdR-boxes. In Lactobacillus gasseri (strain ATCC 33323 / DSM 20243 / BCRC 14619 / CIP 102991 / JCM 1131 / KCTC 3163 / NCIMB 11718 / NCTC 13722 / AM63), this protein is Transcriptional repressor NrdR.